The chain runs to 420 residues: Pre-mRNA-splicing factor RBM22 (420 aa).

Position 2 is an N-acetylalanine (Ala-2). 2 positions are modified to phosphoserine: Ser-4 and Ser-102. Glycyl lysine isopeptide (Lys-Gly) (interchain with G-Cter in SUMO2) cross-links involve residues Lys-139 and Lys-149. The C3H1-type zinc finger occupies 159-186 (RNRPHICSFWVKGECKRGEECPYRHEKP). Position 212 is an N6-acetyllysine (Lys-212). An RRM domain is found at 232 to 305 (TTLYVGGLGD…RRLNVKWGRS (74 aa)). Lys-290 participates in a covalent cross-link: Glycyl lysine isopeptide (Lys-Gly) (interchain with G-Cter in SUMO2). Disordered regions lie at residues 303-343 (GRSQ…AAEE) and 371-420 (IAPP…HSSP). The segment covering 309-318 (RGKEKEKDGT) has biased composition (basic and acidic residues).

Belongs to the SLT11 family. Component of the pre-catalytic and catalytic spliceosome complexes. Component of the postcatalytic spliceosome P complex. Interacts with PDCD6; the interaction induces translocation of PDCD6 in the cytoplasm. Interacts with PPIL1.

The protein localises to the nucleus. It is found in the cytoplasm. Functionally, required for pre-mRNA splicing as component of the activated spliceosome. Involved in the first step of pre-mRNA splicing. Binds directly to the internal stem-loop (ISL) domain of the U6 snRNA and to the pre-mRNA intron near the 5' splice site during the activation and catalytic phases of the spliceosome cycle. Involved in both translocations of the nuclear SLU7 to the cytoplasm and the cytosolic calcium-binding protein PDCD6 to the nucleus upon cellular stress responses. The protein is Pre-mRNA-splicing factor RBM22 (Rbm22) of Rattus norvegicus (Rat).